The sequence spans 316 residues: Arginase-1 (316 aa).

The tract at residues 1-26 (MAKERHSVGVIGAPFSKGQPRRGVEE) is disordered. Mn(2+) is bound by residues H101, D124, H126, and D128. Substrate contacts are provided by residues 126–130 (HADIN), 137–139 (CGN), and D183. Mn(2+) contacts are provided by D232 and D234. T246 serves as a coordination point for substrate.

This sequence belongs to the arginase family. In terms of assembly, homotrimer. Mn(2+) serves as cofactor. As to expression, strongest expression in liver.

The catalysed reaction is L-arginine + H2O = urea + L-ornithine. It functions in the pathway nitrogen metabolism; urea cycle; L-ornithine and urea from L-arginine: step 1/1. The polypeptide is Arginase-1 (arg1) (Xenopus laevis (African clawed frog)).